A 2022-amino-acid polypeptide reads, in one-letter code: MKEQPVLERLQSQKSWIKGVFDKRECSTIIPSSKNPHRCTPVCQVCQNLIRCYCGRLIGDHAGIDYSWTISAAKGKESEQWSVEKHTTKSPTDTFGTINFQDGEHTHHAKYIRTSYDTKLDHLLHLMLKEWKMELPKLVISVHGGIQNFTMPSKFKEIFSQGLVKAAETTGAWIITEGINTGVSKHVGDALKSHSSHSLRKIWTVGIPPWGVIENQRDLIGKDVVCLYQTLDNPLSKLTTLNSMHSHFILSDDGTVGKYGNEMKLRRNLEKYLSLQKIHCRSRQGVPVVGLVVEGGPNVILSVWETVKDKDPVVVCEGTGRAADLLAFTHKHLADEGMLRPQVKEEIICMIQNTFNFSLKQSKHLFQILMECMVHRDCITIFDADSEEQQDLDLAILTALLKGTNLSASEQLNLAMAWDRVDIAKKHILIYEQHWKPDALEQAMSDALVMDRVDFVKLLIEYGVNLHRFLTIPRLEELYNTKQGPTNTLLHHLVQDVKQHTLLSGYRITLIDIGLVVEYLIGRAYRSNYTRKHFRALYNNLYRKYKHQRHSSGNRNESAESTLHSQFIRTAQPYKFKEKSIVLHKSRKKSKEQNVSDDPESTGFLYPYNDLLVWAVLMKRQKMAMFFWQHGEEATVKAVIACILYRAMAHEAKESHMVDDASEELKNYSKQFGQLALDLLEKAFKQNERMAMTLLTYELRNWSNSTCLKLAVSGGLRPFVSHTCTQMLLTDMWMGRLKMRKNSWLKIIISIILPPTILTLEFKSKAEMSHVPQSQDFQFMWYYSDQNASSSKESASVKEYDLERGHDEKLDENQHFGLESGHQHLPWTRKVYEFYSAPIVKFWFYTMAYLAFLMLFTYTVLVEMQPQPSVQEWLVSIYIFTNAIEVVREICISEPGKFTQKVKVWISEYWNLTETVAIGLFSAGFVLRWGDPPFHTAGRLIYCIDIIFWFSRLLDFFAVNQHAGPYVTMIAKMTANMFYIVIIMAIVLLSFGVARKAILSPKEPPSWSLARDIVFEPYWMIYGEVYAGEIDVCSSQPSCPPGSFLTPFLQAVYLFVQYIIMVNLLIAFFNNVYLDMESISNNLWKYNRYRYIMTYHEKPWLPPPLILLSHVGLLLRRLCCHRAPHDQEEGDVGLKLYLSKEDLKKLHDFEEQCVEKYFHEKMEDVNCSCEERIRVTSERVTEMYFQLKEMNEKVSFIKDSLLSLDSQVGHLQDLSALTVDTLKVLSAVDTLQEDEALLAKRKHSTCKKLPHSWSNVICAEVLGSMEIAGEKKYQYYSMPSSLLRSLAGGRHPPRVQRGALLEITNSKREATNVRNDQERQETQSSIVVSGVSPNRQAHSKYGQFLLVPSNLKRVPFSAETVLPLSRPSVPDVLATEQDIQTEVLVHLTGQTPVVSDWASVDEPKEKHEPIAHLLDGQDKAEQVLPTLSCTPEPMTMSSPLSQAKIMQTGGGYVNWAFSEGDETGVFSIKKKWQTCLPSTCDSDSSRSEQHQKQAQDSSLSDNSTRSAQSSECSEVGPWLQPNTSFWINPLRRYRPFARSHSFRFHKEEKLMKICKIKNLSGSSEIGQGAWVKAKMLTKDRRLSKKKKNTQGLQVPIITVNACSQSDQLNPEPGENSISEEEYSKNWFTVSKFSHTGVEPYIHQKMKTKEIGQCAIQISDYLKQSQEDLSKNSLWNSRSTNLNRNSLLKSSIGVDKISASLKSPQEPHHHYSAIERNNLMRLSQTIPFTPVQLFAGEEITVYRLEESSPLNLDKSMSSWSQRGRAAMIQVLSREEMDGGLRKAMRVVSTWSEDDILKPGQVFIVKSFLPEVVRTWHKIFQESTVLHLCLREIQQQRAAQKLIYTFNQVKPQTIPYTPRFLEVFLIYCHSANQWLTIEKYMTGEFRKYNNNNGDEITPTNTLEELMLAFSHWTYEYTRGELLVLDLQGVGENLTDPSVIKPEVKQSRGMVFGPANLGEDAIRNFIAKHHCNSCCRKLKLPDLKRNDYSPERINSTFGLEIKIESAEEPPARETGRNSPEDDMQL.

Residues Met1–Lys741 are Cytoplasmic-facing. Residues Asn742 to Phe762 traverse the membrane as a helical segment. Residues Lys763–Lys841 are Extracellular-facing. Residues Phe842–Val862 form a helical membrane-spanning segment. The Cytoplasmic portion of the chain corresponds to Glu863–Trp905. A helical transmembrane segment spans residues Ile906–Val926. Residues Leu927–Arg939 lie on the Extracellular side of the membrane. Residues Leu940–Asn960 traverse the membrane as a helical segment. Over Gln961–Lys972 the chain is Cytoplasmic. Residues Met973–Val993 traverse the membrane as a helical segment. The Extracellular segment spans residues Ala994 to Asp1012. The segment at residues Ile1013 to Cys1033 is an intramembrane region (pore-forming). Residues Ser1034–Pro1047 lie on the Extracellular side of the membrane. Residues Phe1048–Phe1068 form a helical membrane-spanning segment. Residues Phe1069–Leu2022 lie on the Cytoplasmic side of the membrane. The disordered stretch occupies residues Thr1479–Gly1516. Residues Asp1483–Gln1493 show a composition bias toward basic and acidic residues. Residues Ala1494 to Cys1512 are compositionally biased toward polar residues. An Alpha-type protein kinase domain is found at Asn1750–Leu1980. ADP is bound by residues Gly1777, Gly1778, Leu1779, Arg1780, and Lys1804. Thr1851 carries the post-translational modification Phosphothreonine; by autocatalysis. ADP contacts are provided by Glu1876 and Met1879. His1909 contacts Zn(2+). Asp1923 serves as the catalytic Proton acceptor. Asp1933 is a binding site for ADP. Residues His1966, Cys1968, and Cys1972 each coordinate Zn(2+). A disordered region spans residues Glu1997 to Leu2022. Over residues Ile1998–Pro2016 the composition is skewed to basic and acidic residues.

It in the C-terminal section; belongs to the protein kinase superfamily. Alpha-type protein kinase family. ALPK subfamily. In the N-terminal section; belongs to the transient receptor (TC 1.A.4) family. LTrpC subfamily. TRPM6 sub-subfamily. Homomers. Forms heteromers with TRPM7; TRPM6 increases the current amplitude of TRPM6/7 heteromers as compared to TRPM7 homomer. Interacts (via kinase domain) with RACK1. Post-translationally, autophosphorylated; autophosphorylation controlls the protein kinase activity of TRPM6 towards their substrates. Autophosphorylation of Thr-1851 in the kinase domain is essential for the inhibitory effect of RACK1. The C-terminus of TRPM6 is proteolytically cleaved in vivo, in a cell type-specific fashion, releasing the kinase module from the transmembrane domain. The cleaved kinase fragments are translocated to the nucleus to phosphorylate histones and regulate gene expression. Highly expressed in kidney and colon. Isoform TRPM6a and isoform TRPM6b, are coexpressed with TRPM7 in kidney, and testis, and are also found in several cell lines of lung origin. Isoform TRPM6c is detected only in testis and in NCI-H510A small cell lung carcinoma cells.

The protein resides in the cell membrane. Its subcellular location is the apical cell membrane. It is found in the nucleus. The enzyme catalyses L-seryl-[protein] + ATP = O-phospho-L-seryl-[protein] + ADP + H(+). It catalyses the reaction L-threonyl-[protein] + ATP = O-phospho-L-threonyl-[protein] + ADP + H(+). It carries out the reaction Mg(2+)(in) = Mg(2+)(out). The catalysed reaction is Ca(2+)(in) = Ca(2+)(out). The enzyme catalyses Zn(2+)(in) = Zn(2+)(out). Strongly inhibited by intracellular Mg(2+); unlikely to be active at physiological levels of intracellular Mg(2+). In the heteromeric TRPM6-TRPM7 channels complexes, TRPM7 are able to offset the very high sensitivity of TRPM6 to cytosolic Mg(2+) to physiologically relevant concentrations, whereas TRPM6 relieve TRPM7 from the inhibitory action of Mg-ATP. Consequently, the association of TRPM6 with TRPM7 allow for high constitutive activity of TRPM6/7 in the presence of physiological levels of Mg(2+) and Mg-ATP. The kinase activity is controlled through the autophosphorylation of a serine/threonine-rich region located to the N-terminal of the catalytic domain. Bifunctional protein that combines an ion channel with an intrinsic kinase domain, enabling it to modulate cellular functions either by conducting ions through the pore or by phosphorylating downstream proteins via its kinase domain. Crucial for Mg(2+) homeostasis. Has an important role in epithelial Mg(2+) transport and in the active Mg(2+) absorption in the gut and kidney. However, whether TRPM6 forms functional homomeric channels by itself or functions primarily as a subunit of heteromeric TRPM6-TRPM7 channels, is still under debate. Its function is as follows. The C-terminal kinase domain can be cleaved from the channel segment in a cell-type-specific fashion. The cleaved kinase fragments can translocate to the nucleus, and bind chromatin-remodeling complex proteins to ultimately phosphorylate specific Ser/Thr residues of histones known to be functionally important for cell differentiation and development. This chain is Transient receptor potential cation channel subfamily M member 6 (TRPM6), found in Homo sapiens (Human).